A 93-amino-acid polypeptide reads, in one-letter code: Guanine nucleotide-binding protein subunit gamma (93 aa).

The segment at 1 to 22 (MPQYASRDVGDPSQIKKNKQSM) is disordered. Cys89 carries the S-palmitoyl cysteine lipid modification. The residue at position 90 (Cys90) is a Cysteine methyl ester. Cys90 carries S-farnesyl cysteine lipidation. The propeptide at 91 to 93 (VVM) is removed in mature form.

The protein belongs to the G protein gamma family. In terms of assembly, g proteins are composed of 3 units, alpha, beta and gamma.

It localises to the membrane. The protein is Guanine nucleotide-binding protein subunit gamma (gng-1) of Neurospora crassa (strain ATCC 24698 / 74-OR23-1A / CBS 708.71 / DSM 1257 / FGSC 987).